Reading from the N-terminus, the 177-residue chain is tRNA (cytidine(56)-2'-O)-methyltransferase (177 aa).

S-adenosyl-L-methionine is bound by residues leucine 84 and 109–113; that span reads GAEKV.

The protein belongs to the aTrm56 family. In terms of assembly, homodimer.

The protein localises to the cytoplasm. The enzyme catalyses cytidine(56) in tRNA + S-adenosyl-L-methionine = 2'-O-methylcytidine(56) in tRNA + S-adenosyl-L-homocysteine + H(+). Functionally, specifically catalyzes the AdoMet-dependent 2'-O-ribose methylation of cytidine at position 56 in tRNAs. The chain is tRNA (cytidine(56)-2'-O)-methyltransferase from Methanosarcina barkeri (strain Fusaro / DSM 804).